A 246-amino-acid polypeptide reads, in one-letter code: Probable transcriptional regulatory protein YebC (246 aa).

Residues 1 to 20 form a disordered region; the sequence is MAGHSKWANTRHRKAAQDAK.

The protein belongs to the TACO1 family.

Its subcellular location is the cytoplasm. The polypeptide is Probable transcriptional regulatory protein YebC (Shigella flexneri).